The primary structure comprises 463 residues: Glutamate--tRNA ligase 1 (463 aa).

The short motif at 10 to 20 is the 'HIGH' region element; the sequence is PSPTGYLHIGG. A 'KMSKS' region motif is present at residues 238–242; the sequence is KLSKR. Lys241 contributes to the ATP binding site.

It belongs to the class-I aminoacyl-tRNA synthetase family. Glutamate--tRNA ligase type 1 subfamily. As to quaternary structure, monomer.

The protein resides in the cytoplasm. It catalyses the reaction tRNA(Glu) + L-glutamate + ATP = L-glutamyl-tRNA(Glu) + AMP + diphosphate. Catalyzes the attachment of glutamate to tRNA(Glu) in a two-step reaction: glutamate is first activated by ATP to form Glu-AMP and then transferred to the acceptor end of tRNA(Glu). In Helicobacter pylori (strain HPAG1), this protein is Glutamate--tRNA ligase 1.